Consider the following 355-residue polypeptide: N6-mAMP deaminase (355 aa).

Positions 13 and 15 each coordinate Zn(2+). Residues His-15, Asn-17, His-65, 97–100 (TTPK), Asp-160, and Gly-190 each bind N(6)-methyl-AMP. Residue His-217 participates in Zn(2+) binding. The N(6)-methyl-AMP site is built by Glu-220, Asp-295, and Asp-296. Glu-220 functions as the Proton donor in the catalytic mechanism. Residue Asp-295 participates in Zn(2+) binding.

Belongs to the metallo-dependent hydrolases superfamily. Adenosine and AMP deaminases family. Monomer. It depends on Zn(2+) as a cofactor.

The protein resides in the cytoplasm. Its subcellular location is the cytosol. It catalyses the reaction N(6)-methyl-AMP + H2O + H(+) = IMP + methylamine. In terms of biological role, catalyzes the hydrolysis of the free cytosolic methylated adenosine nucleotide N(6)-methyl-AMP (N6-mAMP) to produce inositol monophosphate (IMP) and methylamine. Is required for the catabolism of cytosolic N6-mAMP, which is derived from the degradation of mRNA containing N6-methylated adenine (m6A). Does not possess deaminase activity toward adenosine, AMP, N6-methyladenosine, or N6-mATP in vitro. The chain is N6-mAMP deaminase from Arabidopsis thaliana (Mouse-ear cress).